The following is a 450-amino-acid chain: Phosphoglucosamine mutase (450 aa).

Catalysis depends on S101, which acts as the Phosphoserine intermediate. The Mg(2+) site is built by S101, D241, D243, and D245. The residue at position 101 (S101) is a Phosphoserine.

Belongs to the phosphohexose mutase family. Mg(2+) is required as a cofactor. In terms of processing, activated by phosphorylation.

The enzyme catalyses alpha-D-glucosamine 1-phosphate = D-glucosamine 6-phosphate. Functionally, catalyzes the conversion of glucosamine-6-phosphate to glucosamine-1-phosphate. The sequence is that of Phosphoglucosamine mutase from Lysinibacillus sphaericus (strain C3-41).